The primary structure comprises 130 residues: Small ribosomal subunit protein uS8 (130 aa).

Belongs to the universal ribosomal protein uS8 family.

This is Small ribosomal subunit protein uS8 (RPS22) from Kluyveromyces marxianus (Yeast).